The following is a 246-amino-acid chain: 1-(5-phosphoribosyl)-5-[(5-phosphoribosylamino)methylideneamino] imidazole-4-carboxamide isomerase (246 aa).

The Proton acceptor role is filled by aspartate 8. Aspartate 131 functions as the Proton donor in the catalytic mechanism.

Belongs to the HisA/HisF family.

The protein resides in the cytoplasm. It catalyses the reaction 1-(5-phospho-beta-D-ribosyl)-5-[(5-phospho-beta-D-ribosylamino)methylideneamino]imidazole-4-carboxamide = 5-[(5-phospho-1-deoxy-D-ribulos-1-ylimino)methylamino]-1-(5-phospho-beta-D-ribosyl)imidazole-4-carboxamide. Its pathway is amino-acid biosynthesis; L-histidine biosynthesis; L-histidine from 5-phospho-alpha-D-ribose 1-diphosphate: step 4/9. The chain is 1-(5-phosphoribosyl)-5-[(5-phosphoribosylamino)methylideneamino] imidazole-4-carboxamide isomerase from Lactococcus lactis subsp. cremoris (strain SK11).